Here is a 102-residue protein sequence, read N- to C-terminus: ATP-dependent Clp protease adapter protein ClpS (102 aa).

This sequence belongs to the ClpS family. Binds to the N-terminal domain of the chaperone ClpA.

Involved in the modulation of the specificity of the ClpAP-mediated ATP-dependent protein degradation. The sequence is that of ATP-dependent Clp protease adapter protein ClpS from Herminiimonas arsenicoxydans.